Consider the following 512-residue polypeptide: Zinc finger CCCH-type with G patch domain-containing protein (512 aa).

Residues 159 to 186 (QEMVPCAYFLEGDCKFNDEMCRFSHGEL) form a C3H1-type zinc finger. A disordered region spans residues 255-280 (LEGDDVPSSDSESNSDSDEENEDDVV). Residues 256-279 (EGDDVPSSDSESNSDSDEENEDDV) show a composition bias toward acidic residues. The G-patch domain maps to 308 to 354 (TKGIGSKIMLKMGYVVGAGLGSKGEGIVVPVSAQVLPQGRSLDYCMQ). Over residues 407–417 (SSNGSSSSSGS) the composition is skewed to low complexity. Residues 407–432 (SSNGSSSSSGSKKPAAKDNQMDLPSC) are disordered.

The protein localises to the nucleus. Transcription repressor. This Aedes aegypti (Yellowfever mosquito) protein is Zinc finger CCCH-type with G patch domain-containing protein.